The following is a 172-amino-acid chain: dCTP pyrophosphatase (172 aa).

It carries out the reaction dCTP + H2O = dCMP + diphosphate + H(+). In Enterobacteria phage LZ5 (Bacteriophage LZ5), this protein is dCTP pyrophosphatase (56).